We begin with the raw amino-acid sequence, 635 residues long: S-type anion channel SLAH3 (635 aa).

At 1–253 (MEEKPNYVIQ…IVLPNDKKWP (253 aa)) the chain is on the cytoplasmic side. The segment covering 102–121 (SDPTTSLSSENHKNSGSTGK) has biased composition (polar residues). Residues 102–173 (SDPTTSLSSE…SGHHQNQNQA (72 aa)) are disordered. A compositionally biased stretch (basic residues) spans 153–165 (NHHHHLHRQHQSG). The residue at position 189 (Ser189) is a Phosphoserine. Residues 193-217 (ERQFTRKPASVEPEAPNRNNQNLNT) are disordered. Residues 254–276 (FLLRYPISTFGMCLGVSSQAIMW) form a helical membrane-spanning segment. Residues 277-299 (KTLATAEPTKFLHVPLWINQGLW) lie on the Extracellular side of the membrane. Residues 300–320 (FISVALILTIATIYLLKIILF) traverse the membrane as a helical segment. The Cytoplasmic segment spans residues 321–335 (FEAVRREYYHPIRIN). The chain crosses the membrane as a helical span at residues 336–356 (FFFAPFISLLFLALGVPPSII). Over 357-358 (TD) the chain is Extracellular. Residues 359–379 (LPHFLWYLLMFPFICLELKIY) traverse the membrane as a helical segment. The Cytoplasmic segment spans residues 380-396 (GQWMSGGQRRLSRVANP). Residues 397 to 417 (TNHLSVVGNFVGALLGASMGL) traverse the membrane as a helical segment. Residues 418–419 (RE) lie on the Extracellular side of the membrane. The chain crosses the membrane as a helical span at residues 420 to 440 (GPIFFYAVGMAHYLVLFVTLY). Residues 441-455 (QRLPTNETLPKDLHP) lie on the Cytoplasmic side of the membrane. Residues 456 to 476 (VFFLFVAAPSVASMAWAKVTG) form a helical membrane-spanning segment. Ser477 is a topological domain (extracellular). Residues 478-498 (FDYGSKVCYFIAIFLYFSLAV) traverse the membrane as a helical segment. Residues 499–504 (RINFFR) lie on the Cytoplasmic side of the membrane. A helical membrane pass occupies residues 505 to 525 (GIKFSLSWWAYTFPMTGAAIA). Topologically, residues 526–541 (TIRYATVVKSTMTQIM) are extracellular. The helical transmembrane segment at 542–562 (CVVLCAIATLVVFALLVTTII) threads the bilayer. At 563–635 (HAFVLRDLFP…NGKTQESDSS (73 aa)) the chain is on the cytoplasmic side. The interval 611–635 (FTDSDSSQSNDVEACNGKTQESDSS) is disordered. Residues 614–635 (SDSSQSNDVEACNGKTQESDSS) are compositionally biased toward polar residues.

It belongs to the SLAC1 S-type anion channel family. As to quaternary structure, homotrimer. Interacts with KAT1. As to expression, expressed in the whole plant, escpecially in vascular systems.

The protein resides in the cell membrane. Its function is as follows. Slow, weak voltage-dependent S-type anion efflux channel involved in maintenance of anion homeostasis. Binds to the highly selective inward-rectifying potassium channel KAT1 and inhibits its activity. Functions as an essential negative regulator of inward potassium channels in guard cells. Essential for the efficient stomatal closure and opening in guard cells. This Arabidopsis thaliana (Mouse-ear cress) protein is S-type anion channel SLAH3 (SLAH3).